The primary structure comprises 1171 residues: DNA-directed RNA polymerase subunit beta (1171 aa).

Belongs to the RNA polymerase beta chain family. As to quaternary structure, the RNAP catalytic core consists of 2 alpha, 1 beta, 1 beta' and 1 omega subunit. When a sigma factor is associated with the core the holoenzyme is formed, which can initiate transcription.

The enzyme catalyses RNA(n) + a ribonucleoside 5'-triphosphate = RNA(n+1) + diphosphate. Its function is as follows. DNA-dependent RNA polymerase catalyzes the transcription of DNA into RNA using the four ribonucleoside triphosphates as substrates. This is DNA-directed RNA polymerase subunit beta from Arthrobacter sp. (strain FB24).